A 260-amino-acid polypeptide reads, in one-letter code: Ras-related protein Rab-32B (260 aa).

The tract at residues 11–50 (FDTDPDVSTDSNYNNNNNSNNNNSIISNSNNNNNNNNNNV) is disordered. Positions 21-49 (SNYNNNNNSNNNNSIISNSNNNNNNNNNN) are enriched in low complexity. 66 to 73 (GDYAVGKS) serves as a coordination point for GTP. The short motif at 88 to 96 (YKLTIGVDF) is the Effector region element. GTP-binding positions include 115 to 119 (DIAGH) and 177 to 180 (NKSD). Residues 231–260 (TNHPPKPEEDTLELTKTNGEKSDDSKSCCK) are disordered. The segment covering 248 to 260 (NGEKSDDSKSCCK) has biased composition (basic and acidic residues). S-geranylgeranyl cysteine attachment occurs at residues C258 and C259.

It belongs to the small GTPase superfamily. Rab family.

This chain is Ras-related protein Rab-32B (rab32B), found in Dictyostelium discoideum (Social amoeba).